Reading from the N-terminus, the 244-residue chain is Rho-related GTP-binding protein RhoE (244 aa).

30–37 (GDSQCGKT) serves as a coordination point for GTP. Residues 52-60 (YVPTVFENY) carry the Effector region motif. GTP contacts are provided by residues 77 to 81 (DTSGS) and 135 to 138 (CKSD). C241 is subject to Cysteine methyl ester. A lipid anchor (S-farnesyl cysteine) is attached at C241. The propeptide at 242 to 244 (TVM) is removed in mature form.

This sequence belongs to the small GTPase superfamily. Rho family. In terms of assembly, binds ROCK1. Interacts with UBXD5. As to expression, ubiquitous.

It is found in the golgi apparatus membrane. Its function is as follows. Binds GTP but lacks intrinsic GTPase activity and is resistant to Rho-specific GTPase-activating proteins. The sequence is that of Rho-related GTP-binding protein RhoE (RND3) from Homo sapiens (Human).